The following is a 78-amino-acid chain: Large ribosomal subunit protein bL28 (78 aa).

It belongs to the bacterial ribosomal protein bL28 family.

This chain is Large ribosomal subunit protein bL28, found in Prochlorococcus marinus (strain MIT 9312).